We begin with the raw amino-acid sequence, 73 residues long: uncharacterized protein (73 aa).

The protein belongs to the asfivirus I73R family.

It is found in the virion. This is an uncharacterized protein from Ornithodoros (relapsing fever ticks).